The sequence spans 66 residues: Ranalexin (66 aa).

Residues 1–20 (MFTLKKSLLLLFFLGTINLS) form the signal peptide. Positions 21 to 44 (LCEEERNAEEERRDNPDERDVEVE) are cleaved as a propeptide — small acidic peptide. Cysteines 60 and 66 form a disulfide.

This sequence belongs to the frog skin active peptide (FSAP) family. Brevinin subfamily. Expressed by the skin dorsal glands.

It localises to the secreted. In terms of biological role, potent microbicidal activity, active against S.aureus and E.coli. It also acts as a membrane-disruptive agent at higher concentrations. The polypeptide is Ranalexin (Aquarana catesbeiana (American bullfrog)).